A 363-amino-acid chain; its full sequence is Heat-inducible transcription repressor HrcA (363 aa).

Belongs to the HrcA family.

Its function is as follows. Negative regulator of class I heat shock genes (grpE-dnaK-dnaJ and groELS operons). Prevents heat-shock induction of these operons. The chain is Heat-inducible transcription repressor HrcA from Rhizobium radiobacter (Agrobacterium tumefaciens).